A 75-amino-acid polypeptide reads, in one-letter code: Small ribosomal subunit protein bS18 (75 aa).

This sequence belongs to the bacterial ribosomal protein bS18 family. In terms of assembly, part of the 30S ribosomal subunit. Forms a tight heterodimer with protein bS6.

Binds as a heterodimer with protein bS6 to the central domain of the 16S rRNA, where it helps stabilize the platform of the 30S subunit. The chain is Small ribosomal subunit protein bS18 from Sodalis glossinidius (strain morsitans).